We begin with the raw amino-acid sequence, 319 residues long: tRNA-cytidine(32) 2-sulfurtransferase (319 aa).

The PP-loop motif signature appears at 45–50 (SGGKDS). Residues Cys120, Cys123, and Cys211 each contribute to the [4Fe-4S] cluster site.

This sequence belongs to the TtcA family. Homodimer. Mg(2+) serves as cofactor. It depends on [4Fe-4S] cluster as a cofactor.

Its subcellular location is the cytoplasm. It carries out the reaction cytidine(32) in tRNA + S-sulfanyl-L-cysteinyl-[cysteine desulfurase] + AH2 + ATP = 2-thiocytidine(32) in tRNA + L-cysteinyl-[cysteine desulfurase] + A + AMP + diphosphate + H(+). It participates in tRNA modification. Its function is as follows. Catalyzes the ATP-dependent 2-thiolation of cytidine in position 32 of tRNA, to form 2-thiocytidine (s(2)C32). The sulfur atoms are provided by the cysteine/cysteine desulfurase (IscS) system. The polypeptide is tRNA-cytidine(32) 2-sulfurtransferase (Shewanella woodyi (strain ATCC 51908 / MS32)).